The sequence spans 533 residues: MSAPAAAPAKVLPSRSDFDEKEKEKDVRTSNIVAARAVADAIRTSLGPKGMDKMIISPNNEVLISNDGATILQNLELRHPAAKMLAELAKAQDIEAGDGTTSVCVIAGSLLGAVSQLMAKGIHPSIISEAFNLALNKSLEVLVSMSVPVSLTDRVSLVKSATTSLNSKVVSQYTNLASIAVDAVLSVINPATAVNVNLKDIKLIKKLGGTIEDTELVQGLVFDQTASHTAGGPTRIQNAKIGLIQFCLSAPKTYMDNNIVVSDYSKMDKVIKEEPKLILEMCRKIQKSGCNVLLVQKSILRDAVNDLSLHYLAKLKILVIKDIERDDIEFICNTIGCQPVANIDSFTADKLGKADLVEEVGTSDGKIVKVTGIPNPGKTVTVLCRGSNKLVLDEAERSLHDALCVIRSLVKKKFLIAGGGAPEIEVSQQVTAFSKTLTGITSYCVRAYAEALEIIPYTLAENAGLHPISIVTELRNKHAQGEINSGINVRKGAITNILQENVVQPLLVSTSALTLATETVVMLLKIDDIATAR.

Residues 1-26 (MSAPAAAPAKVLPSRSDFDEKEKEKD) form a disordered region. Residues 16–26 (SDFDEKEKEKD) are compositionally biased toward basic and acidic residues.

The protein belongs to the TCP-1 chaperonin family. Heterooligomeric complex of about 850 to 900 kDa that forms two stacked rings, 12 to 16 nm in diameter.

Its subcellular location is the cytoplasm. Functionally, molecular chaperone; assists the folding of proteins upon ATP hydrolysis. Known to play a role, in vitro, in the folding of actin and tubulin. The chain is T-complex protein 1 subunit delta (cct4) from Dictyostelium discoideum (Social amoeba).